The chain runs to 323 residues: tRNA dimethylallyltransferase (323 aa).

12-19 contributes to the ATP binding site; it reads GPTAAGKT. Residue 14–19 coordinates substrate; that stretch reads TAAGKT. Interaction with substrate tRNA stretches follow at residues 37–40 and 161–165; these read DSAL and QRLIR.

It belongs to the IPP transferase family. As to quaternary structure, monomer. Requires Mg(2+) as cofactor.

It carries out the reaction adenosine(37) in tRNA + dimethylallyl diphosphate = N(6)-dimethylallyladenosine(37) in tRNA + diphosphate. Catalyzes the transfer of a dimethylallyl group onto the adenine at position 37 in tRNAs that read codons beginning with uridine, leading to the formation of N6-(dimethylallyl)adenosine (i(6)A). The chain is tRNA dimethylallyltransferase from Pseudomonas putida (strain GB-1).